The sequence spans 206 residues: Small ribosomal subunit protein uS7 (206 aa).

Residues methionine 1–proline 19 are compositionally biased toward acidic residues. A disordered region spans residues methionine 1–lysine 25. Serine 2 bears the N-acetylserine mark.

Belongs to the universal ribosomal protein uS7 family. Part of the 30S ribosomal subunit.

Its function is as follows. One of the primary rRNA binding proteins, it binds directly to 16S rRNA where it nucleates assembly of the head domain of the 30S subunit. Is located at the subunit interface close to the decoding center. The chain is Small ribosomal subunit protein uS7 from Haloarcula marismortui (strain ATCC 43049 / DSM 3752 / JCM 8966 / VKM B-1809) (Halobacterium marismortui).